Consider the following 429-residue polypeptide: MKSSYNLRSIAAKVVGQVLDQGQSLSALLPIHQRDVSDKDRALLQELCFGVLRVLPQLEWCIQQLMAKPLTGKQRTLHYLIMVGIYQLHYTRIPPHAALAETVEGAVALKRPQLKGLINGVLRQFQRQQEELLQREATHSSHYLHPSWLLARIEHAYPNNWRGIVEANNQRPPMWLRVNRLHHTREAYLNLLMQGGIEAFPHTEYSDAIRLASPCAVDQLPGFSQGWATVQDASAQGCVYWLDPQDGEQILDLCAAPGGKTTHILEAAPKSHVLAVDVDETRLGRVKENLLRLQMHAEVKQGDGRYPDSWCEARVFDRILLDAPCSATGVIRRHPDIKWLRRDRDIEELVALQKEILDAIWPHLKTGGTMVYATCSILPQENTQQVTGFLSRHADAALVDTGTSEIPGIQILPHADSGDGFFYAKLVKN.

S-adenosyl-L-methionine contacts are provided by residues 254-260 (CAAPGGK), Asp277, Asp303, and Asp322. Catalysis depends on Cys375, which acts as the Nucleophile.

This sequence belongs to the class I-like SAM-binding methyltransferase superfamily. RsmB/NOP family.

Its subcellular location is the cytoplasm. It carries out the reaction cytidine(967) in 16S rRNA + S-adenosyl-L-methionine = 5-methylcytidine(967) in 16S rRNA + S-adenosyl-L-homocysteine + H(+). In terms of biological role, specifically methylates the cytosine at position 967 (m5C967) of 16S rRNA. This is Ribosomal RNA small subunit methyltransferase B from Pectobacterium atrosepticum (strain SCRI 1043 / ATCC BAA-672) (Erwinia carotovora subsp. atroseptica).